The following is a 142-amino-acid chain: ATP synthase epsilon chain (142 aa).

The protein belongs to the ATPase epsilon chain family. As to quaternary structure, F-type ATPases have 2 components, CF(1) - the catalytic core - and CF(0) - the membrane proton channel. CF(1) has five subunits: alpha(3), beta(3), gamma(1), delta(1), epsilon(1). CF(0) has three main subunits: a, b and c.

The protein resides in the cell inner membrane. Its function is as follows. Produces ATP from ADP in the presence of a proton gradient across the membrane. This is ATP synthase epsilon chain from Mannheimia succiniciproducens (strain KCTC 0769BP / MBEL55E).